Here is a 910-residue protein sequence, read N- to C-terminus: MEAKVEEKEPEPVENAGPDAPVRLTPMMEQYIEIKAANVDSLLFYRMGDFYELFFDDAVAASAALGITLTKRGKHLGEDIPMCGVPVHAADDYLQKLIAKGYRVAVCEQVEDPAEAKKRGSKSVVKRDVIRLVTPGTLTEEKLLDPAQANFLMAMGRTRGDGALALAWIDISTGTFRVAETTPDRLFADIMRVDPRELVVADSAFHDEELRPVFDLIGKAVTPQPATLFDSAAAQTRIQHYFNVATLDGFGQFSRPELSAISGAIAYIEKTQISERPPLMRPEREHEGGTLFIDPATRASLELARTMSGNRDGSLLKAIDRTVTGGGARLLAERLTAPLTSPKEIALRLDSVSWCLSEQTLCEALRLELKGVPDMPRALSRLAVGRGGPRDLGALACGFEAAGGIASLLDGALLPDELAAAREAIEKMPAGFAAHLDRALADELPLLKRDGGFVREGYNSELDEMRALRDQSRRVIAGLQADYIEETGIKSLKIKHNNVLGYFIEVTANNSGAMTDTDEAKSRFIHRQTMANAMRFTTTELAELESKIANAADRALSIELAIFEELTAEAVAHADSIRAAASALSVFDVSTALAVLAEERGYCRPHVDDSLSFNIVAGRHPVVEQALRRQAANPFVANDCDLSPQRDGGDGAIWLLTGPNMGGKSTFLRQNALIAILAQMGSFVPAGSAHIGVVDRLFSRVGASDDLARGRSTFMVEMVETAAILNQAGEHSLVILDEIGRGTATFDGLSIAWAAVEYLHEKNRCRALFATHFHEMTALSEKLERLSNVTMRVKEWDNDVIFLHEVAKGAADRSYGVQVARLAGLPEAVVNRARDVLHQLEAGETSGKADRLIDDLPLFSVMLQQEKPKPQIQAKDSELANAVAAISPDELTPREALDLIYKLKELAGKA.

Residues 1-11 (MEAKVEEKEPE) are compositionally biased toward basic and acidic residues. The interval 1–21 (MEAKVEEKEPEPVENAGPDAP) is disordered. 658–665 (GPNMGGKS) contributes to the ATP binding site.

This sequence belongs to the DNA mismatch repair MutS family.

In terms of biological role, this protein is involved in the repair of mismatches in DNA. It is possible that it carries out the mismatch recognition step. This protein has a weak ATPase activity. In Brucella canis (strain ATCC 23365 / NCTC 10854 / RM-666), this protein is DNA mismatch repair protein MutS.